Here is a 377-residue protein sequence, read N- to C-terminus: Trans-enoyl reductase FMN2 (377 aa).

Residues 7 to 370 (NASGGYCLNS…DGVIRGKKLV (364 aa)) enclose the Enoyl reductase (ER) domain. Residues 143–173 (LSDMTGNGRSNGYTNGHTNGHTNGHSKGEEE) are disordered. A compositionally biased stretch (polar residues) spans 144 to 155 (SDMTGNGRSNGY). A compositionally biased stretch (low complexity) spans 156–167 (TNGHTNGHTNGH). NADP(+)-binding positions include 186 to 189 (ASAS), 209 to 212 (SPAN), Tyr227, and 274 to 275 (LD).

The protein belongs to the zinc-containing alcohol dehydrogenase family.

The protein operates within secondary metabolite biosynthesis. Its function is as follows. Trans-enoyl reductase; part of the gene cluster that mediates the biosynthesis of fusamarins, isocoumarin derivatives that show moderate cytotoxicity with IC(50) values between 1 and 50 uM. The polyketide synthase FMN1 probably synthesizes two different polyketides, a tetra- and a pentaketide, containinga varying number of double bonds depending on the selective actions of the trans-enoyl reductase FMN2. Chain fusion will presumably be mediated by the KS domain before finally offloading is catalyzed by the alpha/beta hydrolase fold enzyme FMN3. This is Trans-enoyl reductase FMN2 from Fusarium mangiferae (Mango malformation disease fungus).